The primary structure comprises 444 residues: N-succinylarginine dihydrolase (444 aa).

Substrate-binding positions include 19 to 28 (AGLSFGNVAS), asparagine 110, and 137 to 138 (HR). The active site involves glutamate 174. Arginine 214 contacts substrate. Residue histidine 250 is part of the active site. 2 residues coordinate substrate: aspartate 252 and asparagine 362. The active-site Nucleophile is cysteine 368.

This sequence belongs to the succinylarginine dihydrolase family. Homodimer.

The enzyme catalyses N(2)-succinyl-L-arginine + 2 H2O + 2 H(+) = N(2)-succinyl-L-ornithine + 2 NH4(+) + CO2. It participates in amino-acid degradation; L-arginine degradation via AST pathway; L-glutamate and succinate from L-arginine: step 2/5. In terms of biological role, catalyzes the hydrolysis of N(2)-succinylarginine into N(2)-succinylornithine, ammonia and CO(2). This Shewanella oneidensis (strain ATCC 700550 / JCM 31522 / CIP 106686 / LMG 19005 / NCIMB 14063 / MR-1) protein is N-succinylarginine dihydrolase.